The following is a 1006-amino-acid chain: Pleckstrin homology domain-containing family G member 5 (1006 aa).

3 disordered regions span residues 1–71 (MHYD…HTDD), 148–198 (PAKP…DILA), and 212–242 (EASIPGQEPPTPSSCSLPSGSSGSTNTGDSW). Residues 36–45 (DLEEEEEESS) are compositionally biased toward acidic residues. 2 stretches are compositionally biased toward basic and acidic residues: residues 151–165 (PGDEGKVEQGMKDSK) and 183–194 (ERVDAQSRRESL). A compositionally biased stretch (low complexity) spans 224-242 (SSCSLPSGSSGSTNTGDSW). The DH domain occupies 336-528 (HQQEAVWELL…ERFIHHVNAC (193 aa)). Residues 584–684 (QLLLEGSLRM…WVDTIYNAQN (101 aa)) form the PH domain. Disordered regions lie at residues 690–754 (RAQE…ASDG), 768–820 (DTLS…SAYG), and 837–863 (AELVPRAPESPRVPSPPPSPRLRRRTP). Acidic residues predominate over residues 704-726 (LEEEEDEQEEEEEEEEEEEEGED). Polar residues-rich tracts occupy residues 727–754 (SGTSAASSPTIMRKSSGSPDSQHCASDG) and 769–785 (TLSSPEFDSGPFSSQSD). T729 bears the Phosphothreonine mark. At S734 the chain carries Phosphoserine. Residues 786 to 803 (ETSLSTTASSATPTSELL) are compositionally biased toward low complexity. Pro residues predominate over residues 847–856 (PRVPSPPPSP). 3 positions are modified to phosphoserine: S851, S876, and S881. The tract at residues 950 to 979 (AGSHRKRCGDLPSGASPRVQPEPPPGVSAQ) is disordered.

In terms of assembly, interacts with GIPC1/synectin and RHOA. In terms of tissue distribution, predominantly expressed in the peripheral nervous system and brain. Highest expression is observed in heart, lung, kidney, testis and moderate expression is present in spleen, pancreas, skeletal muscle, ovary and liver. Weakly expressed in glioblastoma (GBM) cell lines.

Its subcellular location is the cytoplasm. It is found in the perinuclear region. The protein resides in the cell membrane. The protein localises to the cell junction. It localises to the cell projection. Its subcellular location is the lamellipodium. Its function is as follows. Functions as a guanine exchange factor (GEF) for RAB26 and thus regulates autophagy of synaptic vesicles in axon terminal of motoneurons. Involved in the control of neuronal cell differentiation. Plays a role in angiogenesis through regulation of endothelial cells chemotaxis. Also affects the migration, adhesion, and matrix/bone degradation in macrophages and osteoclasts. This chain is Pleckstrin homology domain-containing family G member 5 (PLEKHG5), found in Homo sapiens (Human).